A 394-amino-acid polypeptide reads, in one-letter code: Elongation factor Tu (394 aa).

The 195-residue stretch at K10 to E204 folds into the tr-type G domain. The interval G19–T26 is G1. G19 to T26 is a binding site for GTP. T26 is a Mg(2+) binding site. The tract at residues G60–N64 is G2. Positions D81–G84 are G3. GTP is bound by residues D81–H85 and N136–D139. Residues N136–D139 form a G4 region. The segment at S174–L176 is G5.

It belongs to the TRAFAC class translation factor GTPase superfamily. Classic translation factor GTPase family. EF-Tu/EF-1A subfamily. In terms of assembly, monomer.

The protein localises to the cytoplasm. It catalyses the reaction GTP + H2O = GDP + phosphate + H(+). GTP hydrolase that promotes the GTP-dependent binding of aminoacyl-tRNA to the A-site of ribosomes during protein biosynthesis. The chain is Elongation factor Tu from Chlamydia caviae (strain ATCC VR-813 / DSM 19441 / 03DC25 / GPIC) (Chlamydophila caviae).